Here is a 497-residue protein sequence, read N- to C-terminus: UDP-N-acetylmuramoyl-L-alanyl-D-glutamate--2,6-diaminopimelate ligase (497 aa).

Serine 33 is a binding site for UDP-N-acetyl-alpha-D-muramoyl-L-alanyl-D-glutamate. Glycine 119–threonine 125 is a binding site for ATP. UDP-N-acetyl-alpha-D-muramoyl-L-alanyl-D-glutamate contacts are provided by residues threonine 161–threonine 162, serine 188, glutamine 194, and arginine 196. Lysine 228 carries the N6-carboxylysine modification. Meso-2,6-diaminopimelate contacts are provided by residues arginine 390, aspartate 414–arginine 417, glycine 465, and glutamate 469. Residues aspartate 414–arginine 417 carry the Meso-diaminopimelate recognition motif motif.

It belongs to the MurCDEF family. MurE subfamily. The cofactor is Mg(2+). Carboxylation is probably crucial for Mg(2+) binding and, consequently, for the gamma-phosphate positioning of ATP.

It localises to the cytoplasm. The catalysed reaction is UDP-N-acetyl-alpha-D-muramoyl-L-alanyl-D-glutamate + meso-2,6-diaminopimelate + ATP = UDP-N-acetyl-alpha-D-muramoyl-L-alanyl-gamma-D-glutamyl-meso-2,6-diaminopimelate + ADP + phosphate + H(+). Its pathway is cell wall biogenesis; peptidoglycan biosynthesis. Its function is as follows. Catalyzes the addition of meso-diaminopimelic acid to the nucleotide precursor UDP-N-acetylmuramoyl-L-alanyl-D-glutamate (UMAG) in the biosynthesis of bacterial cell-wall peptidoglycan. The protein is UDP-N-acetylmuramoyl-L-alanyl-D-glutamate--2,6-diaminopimelate ligase of Synechococcus elongatus (strain ATCC 33912 / PCC 7942 / FACHB-805) (Anacystis nidulans R2).